A 494-amino-acid chain; its full sequence is Chromosomal replication initiator protein DnaA (494 aa).

The interval 1-103 (MTTDPDPPFV…PVSDESDSGS (103 aa)) is domain I, interacts with DnaA modulators. The tract at residues 94 to 117 (PVSDESDSGSVASPAPVAAADPDD) is disordered. A compositionally biased stretch (low complexity) spans 101-113 (SGSVASPAPVAAA). The segment at 104 to 153 (VASPAPVAAADPDDDVVDDDLAARASAEESWPSYFTNRANRAAEDDATSV) is domain II. A domain III, AAA+ region region spans residues 154 to 370 (NLNRRYTFDT…GALIRVTAFA (217 aa)). ATP is bound by residues Gly-198, Gly-200, Lys-201, and Thr-202. A domain IV, binds dsDNA region spans residues 371-494 (SLNKTPIDKS…TTRIRQRAKR (124 aa)).

It belongs to the DnaA family. Oligomerizes as a right-handed, spiral filament on DNA at oriC.

It localises to the cytoplasm. Its function is as follows. Plays an essential role in the initiation and regulation of chromosomal replication. ATP-DnaA binds to the origin of replication (oriC) to initiate formation of the DNA replication initiation complex once per cell cycle. Binds the DnaA box (a 9 base pair repeat at the origin) and separates the double-stranded (ds)DNA. Forms a right-handed helical filament on oriC DNA; dsDNA binds to the exterior of the filament while single-stranded (ss)DNA is stabiized in the filament's interior. The ATP-DnaA-oriC complex binds and stabilizes one strand of the AT-rich DNA unwinding element (DUE), permitting loading of DNA polymerase. After initiation quickly degrades to an ADP-DnaA complex that is not apt for DNA replication. Binds acidic phospholipids. This chain is Chromosomal replication initiator protein DnaA, found in Mycolicibacterium vanbaalenii (strain DSM 7251 / JCM 13017 / BCRC 16820 / KCTC 9966 / NRRL B-24157 / PYR-1) (Mycobacterium vanbaalenii).